The primary structure comprises 73 residues: YFSYNDKIIKILEAEYLNADHHFTSGTVISDKLEIACGSGILRVKKLQQESKKALNIEEFLRGTNILKDTVLK.

This sequence belongs to the Fmt family.

The enzyme catalyses L-methionyl-tRNA(fMet) + (6R)-10-formyltetrahydrofolate = N-formyl-L-methionyl-tRNA(fMet) + (6S)-5,6,7,8-tetrahydrofolate + H(+). Attaches a formyl group to the free amino group of methionyl-tRNA(fMet). The formyl group appears to play a dual role in the initiator identity of N-formylmethionyl-tRNA by promoting its recognition by IF2 and preventing the misappropriation of this tRNA by the elongation apparatus. The polypeptide is Methionyl-tRNA formyltransferase (fmt) (Rickettsia parkeri).